A 675-amino-acid polypeptide reads, in one-letter code: Acyl-coenzyme A oxidase 3, peroxisomal (675 aa).

The transit peptide at 1-34 (MSDNRALRRAHVLANHILQSNPPSSNPSLSRELC) directs the protein to the peroxisome. 442-457 (AVGGQGVKTENLVGQL) contributes to the FAD binding site.

The protein belongs to the acyl-CoA oxidase family. FAD is required as a cofactor. As to expression, most abundant in flowers and senescing rosette leaves. Lower expression in hypocotyls, stems, young rosette leaves, cotyledons, cauline leaves and root tip of young seedlings.

It localises to the peroxisome. The enzyme catalyses a 2,3-saturated acyl-CoA + O2 = a (2E)-enoyl-CoA + H2O2. The protein operates within lipid metabolism; peroxisomal fatty acid beta-oxidation. Its function is as follows. Catalyzes the desaturation of medium-chain acyl-CoAs to 2-trans-enoyl-CoAs. Active on C8:0- to C14:0-CoA with a maximal activity on C12:0-CoA. This Arabidopsis thaliana (Mouse-ear cress) protein is Acyl-coenzyme A oxidase 3, peroxisomal (ACX3).